Reading from the N-terminus, the 507-residue chain is Arylsulfatase A (507 aa).

An N-terminal signal peptide occupies residues methionine 1 to alanine 18. 3 residues coordinate Ca(2+): aspartate 29, aspartate 30, and cysteine 69. Residue cysteine 69 is the Nucleophile of the active site. Cysteine 69 bears the 3-oxoalanine (Cys) mark. Lysine 123 is a substrate binding site. The active site involves histidine 125. Serine 150 provides a ligand contact to substrate. Disulfide bonds link cysteine 156/cysteine 172 and cysteine 161/cysteine 168. Asparagine 158 is a glycosylation site (N-linked (GlcNAc...) asparagine). Residue asparagine 184 is glycosylated (N-linked (GlcNAc...) asparagine). Residue histidine 229 coordinates substrate. Residues aspartate 281 and asparagine 282 each coordinate Ca(2+). Disulfide bonds link cysteine 300-cysteine 414, cysteine 488-cysteine 500, cysteine 489-cysteine 502, and cysteine 493-cysteine 499. Lysine 302 is a substrate binding site. N-linked (GlcNAc...) asparagine glycosylation is present at asparagine 350.

Belongs to the sulfatase family. Homodimer at neutral pH and homooctamer at acidic pH. Exists both as a single chain of 58 kDa (component A) or as a chain of 50 kDa (component B) linked by disulfide bond(s) to a 7 kDa chain (component C). Interacts with SUMF1. Ca(2+) is required as a cofactor. In terms of processing, the conversion to 3-oxoalanine (also known as C-formylglycine, FGly), of a serine or cysteine residue in prokaryotes and of a cysteine residue in eukaryotes, is critical for catalytic activity. This post-translational modification is severely defective in multiple sulfatase deficiency (MSD).

It localises to the endoplasmic reticulum. The protein localises to the lysosome. It carries out the reaction an N-acyl-1-beta-D-(3-O-sulfo)-galactosyl-sphing-4-enine + H2O = a beta-D-galactosyl-(1&lt;-&gt;1')-N-acylsphing-4-enine + sulfate + H(+). Its activity is regulated as follows. Inhibited by phosphate. The phosphate forms a covalent bond with the active site 3-oxoalanine. Its function is as follows. Hydrolyzes cerebroside sulfate. The protein is Arylsulfatase A (ARSA) of Homo sapiens (Human).